Consider the following 252-residue polypeptide: Ciliogenesis and planar polarity effector 2 (252 aa).

The tract at residues 46–252 is small GTPase-like; the sequence is QMNVDLVRYK…LRETSSEIIV (207 aa). GTP contacts are provided by residues 62-67 and 173-176; these read TGVGKS and TKFD.

This sequence belongs to the small GTPase superfamily. Rab family.

It is found in the cytoplasm. The protein localises to the cytoskeleton. It localises to the cilium basal body. Its function is as follows. Potential effector of the planar cell polarity signaling pathway. Plays a role in targeted membrane trafficking most probably at the level of vesicle fusion with membranes. Involved in cilium biogenesis by regulating the transport of cargo proteins to the basal body and to the apical tips of cilia. More generally involved in exocytosis in secretory cells. The sequence is that of Ciliogenesis and planar polarity effector 2 (cplane2) from Danio rerio (Zebrafish).